Consider the following 161-residue polypeptide: Crossover junction endodeoxyribonuclease RuvC (161 aa).

Active-site residues include aspartate 9, glutamate 72, and aspartate 144. Positions 9, 72, and 144 each coordinate Mg(2+).

This sequence belongs to the RuvC family. Homodimer which binds Holliday junction (HJ) DNA. The HJ becomes 2-fold symmetrical on binding to RuvC with unstacked arms; it has a different conformation from HJ DNA in complex with RuvA. In the full resolvosome a probable DNA-RuvA(4)-RuvB(12)-RuvC(2) complex forms which resolves the HJ. Requires Mg(2+) as cofactor.

Its subcellular location is the cytoplasm. It catalyses the reaction Endonucleolytic cleavage at a junction such as a reciprocal single-stranded crossover between two homologous DNA duplexes (Holliday junction).. The RuvA-RuvB-RuvC complex processes Holliday junction (HJ) DNA during genetic recombination and DNA repair. Endonuclease that resolves HJ intermediates. Cleaves cruciform DNA by making single-stranded nicks across the HJ at symmetrical positions within the homologous arms, yielding a 5'-phosphate and a 3'-hydroxyl group; requires a central core of homology in the junction. The consensus cleavage sequence is 5'-(A/T)TT(C/G)-3'. Cleavage occurs on the 3'-side of the TT dinucleotide at the point of strand exchange. HJ branch migration catalyzed by RuvA-RuvB allows RuvC to scan DNA until it finds its consensus sequence, where it cleaves and resolves the cruciform DNA. This Synechococcus sp. (strain ATCC 27144 / PCC 6301 / SAUG 1402/1) (Anacystis nidulans) protein is Crossover junction endodeoxyribonuclease RuvC.